We begin with the raw amino-acid sequence, 382 residues long: Chaperone protein DnaJ (382 aa).

The region spanning 5 to 70 is the J domain; that stretch reads DYYEVLGVSR…DKKAAYDRYG (66 aa). The CR-type zinc finger occupies 141-219; the sequence is GVQKTINVPA…CHGAGRVEKE (79 aa). Residues cysteine 154, cysteine 157, cysteine 171, cysteine 174, cysteine 193, cysteine 196, cysteine 207, and cysteine 210 each contribute to the Zn(2+) site. CXXCXGXG motif repeat units lie at residues 154–161, 171–178, 193–200, and 207–214; these read CDACKGTG, CPTCSGMG, CPTCNGMG, and CKVCHGAG.

Belongs to the DnaJ family. As to quaternary structure, homodimer. Requires Zn(2+) as cofactor.

Its subcellular location is the cytoplasm. Functionally, participates actively in the response to hyperosmotic and heat shock by preventing the aggregation of stress-denatured proteins and by disaggregating proteins, also in an autonomous, DnaK-independent fashion. Unfolded proteins bind initially to DnaJ; upon interaction with the DnaJ-bound protein, DnaK hydrolyzes its bound ATP, resulting in the formation of a stable complex. GrpE releases ADP from DnaK; ATP binding to DnaK triggers the release of the substrate protein, thus completing the reaction cycle. Several rounds of ATP-dependent interactions between DnaJ, DnaK and GrpE are required for fully efficient folding. Also involved, together with DnaK and GrpE, in the DNA replication of plasmids through activation of initiation proteins. This chain is Chaperone protein DnaJ, found in Cereibacter sphaeroides (strain ATCC 17023 / DSM 158 / JCM 6121 / CCUG 31486 / LMG 2827 / NBRC 12203 / NCIMB 8253 / ATH 2.4.1.) (Rhodobacter sphaeroides).